We begin with the raw amino-acid sequence, 115 residues long: T cell receptor beta variable 7-7 (115 aa).

A signal peptide spans 1–21 (MGTSLLCWVVLGFLGTDHTGA). Residues 22–115 (GVSQSPRYKV…SAMYRCASSL (94 aa)) form the Ig-like domain. An intrachain disulfide couples cysteine 42 to cysteine 111.

Alpha-beta TR is a heterodimer composed of an alpha and beta chain; disulfide-linked. The alpha-beta TR is associated with the transmembrane signaling CD3 coreceptor proteins to form the TR-CD3 (TcR or TCR). The assembly of alpha-beta TR heterodimers with CD3 occurs in the endoplasmic reticulum where a single alpha-beta TR heterodimer associates with one CD3D-CD3E heterodimer, one CD3G-CD3E heterodimer and one CD247 homodimer forming a stable octameric structure. CD3D-CD3E and CD3G-CD3E heterodimers preferentially associate with TR alpha and TR beta chains, respectively. The association of the CD247 homodimer is the last step of TcR assembly in the endoplasmic reticulum and is required for transport to the cell surface.

It is found in the cell membrane. In terms of biological role, v region of the variable domain of T cell receptor (TR) beta chain that participates in the antigen recognition. Alpha-beta T cell receptors are antigen specific receptors which are essential to the immune response and are present on the cell surface of T lymphocytes. Recognize peptide-major histocompatibility (MH) (pMH) complexes that are displayed by antigen presenting cells (APC), a prerequisite for efficient T cell adaptive immunity against pathogens. Binding of alpha-beta TR to pMH complex initiates TR-CD3 clustering on the cell surface and intracellular activation of LCK that phosphorylates the ITAM motifs of CD3G, CD3D, CD3E and CD247 enabling the recruitment of ZAP70. In turn ZAP70 phosphorylates LAT, which recruits numerous signaling molecules to form the LAT signalosome. The LAT signalosome propagates signal branching to three major signaling pathways, the calcium, the mitogen-activated protein kinase (MAPK) kinase and the nuclear factor NF-kappa-B (NF-kB) pathways, leading to the mobilization of transcription factors that are critical for gene expression and essential for T cell growth and differentiation. The T cell repertoire is generated in the thymus, by V-(D)-J rearrangement. This repertoire is then shaped by intrathymic selection events to generate a peripheral T cell pool of self-MH restricted, non-autoaggressive T cells. Post-thymic interaction of alpha-beta TR with the pMH complexes shapes TR structural and functional avidity. The chain is T cell receptor beta variable 7-7 from Homo sapiens (Human).